The chain runs to 142 residues: MGAPTLPPAWQPFLKDHRISTFKNWPFLEGCACTPERMAEAGFIHCPTENEPDLAQCFFCFKELEGWEPDDDPIEEHKKHSSGCAFLSVKKQFEELTLGEFLKLDRERAKNKIAKETNNKKKEFEETAKKVRRAIEQLAAMD.

The stretch at 18-88 is one BIR repeat; the sequence is RISTFKNWPF…KHSSGCAFLS (71 aa). A Phosphoserine; by AURKC modification is found at S20. K23 bears the N6-acetyllysine mark. T34 bears the Phosphothreonine; by CDK1 and CDK15 mark. Residue T48 is modified to Phosphothreonine. Zn(2+) is bound by residues C57, C60, H77, and C84. An N6-acetyllysine mark is found at K90, K110, K112, and K115. Position 117 is a phosphothreonine; by AURKB (T117). The residue at position 129 (K129) is an N6-acetyllysine.

This sequence belongs to the IAP family. Monomer or homodimer. Exists as a homodimer in the apo state and as a monomer in the CPC-bound state. The monomer protects cells against apoptosis more efficiently than the dimer. Only the dimeric form is capable of enhancing tubulin stability in cells. When phosphorylated, interacts with LAMTOR5/HBXIP; the resulting complex binds pro-CASP9, as well as active CASP9, but much less efficiently. Component of the chromosomal passenger complex (CPC) composed of at least BIRC5/survivin, CDCA8/borealin, INCENP, AURKB or AURKC; in the complex forms a triple-helix bundle-based subcomplex with INCENP and CDCA8. Interacts with JTB. Interacts (via BIR domain) with histone H3 phosphorylated at 'Thr-3' (H3pT3). Interacts with EVI5. Interacts with GTP-bound RAN in both the S and M phases of the cell cycle. Interacts with USP9X. Interacts with tubulin. Interacts with BIRC2/c-IAP1. The acetylated form at Lys-129 interacts with STAT3. The monomeric form deacetylated at Lys-129 interacts with XPO1/CRM1. The monomeric form interacts with XIAP/BIRC4. Both the dimeric and monomeric form can interact with DIABLO/SMAC. Interacts with BIRC6/bruce. Interacts with FBXL7; this interaction facilitates the polyubiquitination and subsequent proteasomal degradation of BIRC5 by the SCF(FBXL7) E3 ubiquitin-protein ligase complex. Post-translationally, ubiquitinated by the Cul9-RING ubiquitin-protein ligase complex, leading to its degradation. Ubiquitination is required for centrosomal targeting. Deubiquitinated by USP35 or USP38; leading to stabilization. Acetylation at Lys-129 results in its homodimerization, while deacetylation promotes the formation of monomers which heterodimerize with XPO1/CRM1 which facilitates its nuclear export. The acetylated form represses STAT3 transactivation. The dynamic equilibrium between its acetylation and deacetylation at Lys-129 determines its interaction with XPO1/CRM1, its subsequent subcellular localization, and its ability to inhibit STAT3 transactivation. In terms of processing, in vitro phosphorylation at Thr-117 by AURKB prevents interaction with INCENP and localization to mitotic chromosomes. Phosphorylation at Thr-48 by CK2 is critical for its mitotic and anti-apoptotic activities. Phosphorylation at Thr-34 by CDK15 is critical for its anti-apoptotic activity. Phosphorylation at Ser-20 by AURKC is critical for regulation of proper chromosome alignment and segregation, and possibly cytokinesis.

The protein localises to the cytoplasm. It is found in the nucleus. It localises to the chromosome. The protein resides in the centromere. Its subcellular location is the cytoskeleton. The protein localises to the spindle. It is found in the kinetochore. It localises to the midbody. Its function is as follows. Multitasking protein that has dual roles in promoting cell proliferation and preventing apoptosis. Component of a chromosome passage protein complex (CPC) which is essential for chromosome alignment and segregation during mitosis and cytokinesis. Acts as an important regulator of the localization of this complex; directs CPC movement to different locations from the inner centromere during prometaphase to midbody during cytokinesis and participates in the organization of the center spindle by associating with polymerized microtubules. Involved in the recruitment of CPC to centromeres during early mitosis via association with histone H3 phosphorylated at 'Thr-3' (H3pT3) during mitosis. The complex with RAN plays a role in mitotic spindle formation by serving as a physical scaffold to help deliver the RAN effector molecule TPX2 to microtubules. May counteract a default induction of apoptosis in G2/M phase. The acetylated form represses STAT3 transactivation of target gene promoters. May play a role in neoplasia. Inhibitor of CASP3 and CASP7. Essential for the maintenance of mitochondrial integrity and function. This is Baculoviral IAP repeat-containing protein 5 (BIRC5) from Pongo abelii (Sumatran orangutan).